A 710-amino-acid polypeptide reads, in one-letter code: Bifunctional sesterterpene synthase (710 aa).

The interval 1 to 327 is stellata-2,6,19-trien synthase; it reads MEFKFSAVVD…RYYTDASFSE (327 aa). Aspartate 92 and aspartate 96 together coordinate Mg(2+). Substrate-binding positions include aspartate 92, aspartate 96, 181 to 184, and 229 to 233; these read RVHD and SWDKE. A DDXXD motif 1 motif is present at residues 92 to 96; the sequence is DDVTD. Positions 278–286 match the NSE motif motif; the sequence is YLRVFEEVK. Residue 318–319 participates in substrate binding; that stretch reads RY. A geranylgeranyl diphosphate synthase region spans residues 328–709; sequence RQLEWMKNGI…LRLIFELLRN (382 aa). The tract at residues 365 to 404 is disordered; the sequence is HHAVTSNGTGTGSHDTLNGDGTAHENNSRDASIPGRTTNG. Positions 368–380 are enriched in polar residues; sequence VTSNGTGTGSHDT. The isopentenyl diphosphate site is built by lysine 430, arginine 433, and histidine 462. Mg(2+) is bound by residues aspartate 469 and aspartate 473. The short motif at 469–473 is the DDXXD motif 2 element; the sequence is DDLED. Dimethylallyl diphosphate is bound at residue arginine 478. Position 479 (arginine 479) interacts with isopentenyl diphosphate. Dimethylallyl diphosphate-binding residues include lysine 556, threonine 557, glutamine 592, asparagine 599, lysine 609, and lysine 619.

It in the C-terminal section; belongs to the FPP/GGPP synthase family. The protein in the N-terminal section; belongs to the terpene synthase family. As to quaternary structure, hexamer.

It carries out the reaction 4 isopentenyl diphosphate + dimethylallyl diphosphate = (2E,6E,10E,14E)-geranylfarnesyl diphosphate + 4 diphosphate. The catalysed reaction is (2E,6E,10E,14E)-geranylfarnesyl diphosphate = variecoladiene + diphosphate. The protein operates within secondary metabolite biosynthesis; terpenoid biosynthesis. Multifunctional sesterterpene synthase; part of the gene cluster that mediates the biosynthesis of the sesterterpene variecolin. The first step in the pathway is performed by the variecoladiene synthase vrcA that possesses both prenyl transferase and terpene cyclase activity, converting isopentenyl diphosphate and dimethylallyl diphosphate into geranylfarnesyl pyrophosphate (GFPP) and then converting GFPP into the tetracyclic variecoladiene. The cytochrome P450 monooxygenase vrcB then catalyzes multiple oxidations at C-5 and C-20 positions to yield variecolin. This is Bifunctional sesterterpene synthase from Aspergillus aculeatus (strain ATCC 16872 / CBS 172.66 / WB 5094).